A 248-amino-acid chain; its full sequence is Ubiquinone/menaquinone biosynthesis C-methyltransferase UbiE (248 aa).

S-adenosyl-L-methionine-binding positions include serine 68, aspartate 92, and 120–121 (NA).

It belongs to the class I-like SAM-binding methyltransferase superfamily. MenG/UbiE family.

The enzyme catalyses a 2-demethylmenaquinol + S-adenosyl-L-methionine = a menaquinol + S-adenosyl-L-homocysteine + H(+). The catalysed reaction is a 2-methoxy-6-(all-trans-polyprenyl)benzene-1,4-diol + S-adenosyl-L-methionine = a 5-methoxy-2-methyl-3-(all-trans-polyprenyl)benzene-1,4-diol + S-adenosyl-L-homocysteine + H(+). Its pathway is quinol/quinone metabolism; menaquinone biosynthesis; menaquinol from 1,4-dihydroxy-2-naphthoate: step 2/2. The protein operates within cofactor biosynthesis; ubiquinone biosynthesis. Its function is as follows. Methyltransferase required for the conversion of demethylmenaquinol (DMKH2) to menaquinol (MKH2) and the conversion of 2-polyprenyl-6-methoxy-1,4-benzoquinol (DDMQH2) to 2-polyprenyl-3-methyl-6-methoxy-1,4-benzoquinol (DMQH2). The chain is Ubiquinone/menaquinone biosynthesis C-methyltransferase UbiE from Rickettsia typhi (strain ATCC VR-144 / Wilmington).